A 388-amino-acid chain; its full sequence is Alanine racemase (388 aa).

Catalysis depends on K44, which acts as the Proton acceptor; specific for D-alanine. K44 carries the post-translational modification N6-(pyridoxal phosphate)lysine. Substrate is bound at residue R142. Residue Y273 is the Proton acceptor; specific for L-alanine of the active site. A substrate-binding site is contributed by M321.

This sequence belongs to the alanine racemase family. Requires pyridoxal 5'-phosphate as cofactor.

It carries out the reaction L-alanine = D-alanine. It participates in amino-acid biosynthesis; D-alanine biosynthesis; D-alanine from L-alanine: step 1/1. Catalyzes the interconversion of L-alanine and D-alanine. May also act on other amino acids. The sequence is that of Alanine racemase (alr) from Mycobacterium ulcerans (strain Agy99).